The following is a 212-amino-acid chain: Ribonuclease HII (212 aa).

Positions 17-206 (RVIAGVDEAG…KSTKPQSLQT (190 aa)) constitute an RNase H type-2 domain. 3 residues coordinate a divalent metal cation: D23, E24, and D115.

The protein belongs to the RNase HII family. The cofactor is Mn(2+). Mg(2+) is required as a cofactor.

It localises to the cytoplasm. The enzyme catalyses Endonucleolytic cleavage to 5'-phosphomonoester.. Its function is as follows. Endonuclease that specifically degrades the RNA of RNA-DNA hybrids. This chain is Ribonuclease HII, found in Syntrophus aciditrophicus (strain SB).